The sequence spans 336 residues: Glutamyl endopeptidase (336 aa).

Positions 1-29 are cleaved as a signal peptide; it reads MKGKFLKVSSLFVATLTTATLVSSPAANA. Residues 30-68 constitute a propeptide that is removed on maturation; sequence LSSKAMDNHPQQTQSSKQQTPKIQKGGNLKPLEQREHAN. A disordered region spans residues 34–61; it reads AMDNHPQQTQSSKQQTPKIQKGGNLKPL. Positions 39 to 51 are enriched in low complexity; sequence PQQTQSSKQQTPK. Active-site charge relay system residues include His119, Asp161, and Ser237. Residues 283–336 form a disordered region; the sequence is FANDDQPNNPDNPDNPNNPDNPNNPDEPNNPDNPNNPDNPDNGDTNNSDNPDAA. A compositionally biased stretch (low complexity) spans 286–336; that stretch reads DDQPNNPDNPDNPNNPDNPNNPDEPNNPDNPNNPDNPDNGDTNNSDNPDAA. 11 repeat units span residues 289–291, 292–294, 295–297, 298–300, 301–303, 304–306, 310–312, 313–315, 316–318, 319–321, and 322–324. Residues 289-324 are 11 X 3 AA repeats of P-[DN]-N; that stretch reads PNNPDNPDNPNNPDNPNNPDEPNNPDNPNNPDNPDN.

Belongs to the peptidase S1B family. Proteolytically cleaved by aureolysin (aur). This cleavage leads to the activation of SspA.

It localises to the secreted. It carries out the reaction Preferential cleavage: Glu-|-Xaa, Asp-|-Xaa.. Preferentially cleaves peptide bonds on the carboxyl-terminal side of aspartate and glutamate. Along with other extracellular proteases it is involved in colonization and infection of human tissues. Required for proteolytic maturation of thiol protease SspB and inactivation of SspC, an inhibitor of SspB. It is the most important protease for degradation of fibronectin-binding protein (FnBP) and surface protein A, which are involved in adherence to host cells. May also protect bacteria against host defense mechanism by cleaving the immunoglobulin classes IgG, IgA and IgM. May be involved in the stability of secreted lipases. This is Glutamyl endopeptidase (sspA) from Staphylococcus aureus (strain COL).